A 1204-amino-acid chain; its full sequence is Cingulin (1204 aa).

Residues 7–359 form a head region; that stretch reads MAEPRGPVDH…VMMSSGSSKA (353 aa). A disordered region spans residues 25–48; sequence EPVSGAEMGTLRRGGRRPAKDARA. Residues 48–62 carry the ZIM motif; it reads ASTYGVAVRVQGIAG. Residues 54–67 are interaction with TJP1/ZO1; that stretch reads AVRVQGIAGQPFVV. Positions 68 to 269 are disordered; that stretch reads LNSGEKGGDS…SPLSGLSRAR (202 aa). Phosphoserine occurs at positions 95, 96, 98, 135, 137, 140, 155, and 165. Over residues 126–140 the composition is skewed to polar residues; it reads TQWNGKLLRSQSQAS. The span at 166–190 shows a compositional bias: polar residues; sequence PGSTIDTAPLSSVDSLINKFDSQLR. Positions 207–231 are enriched in basic and acidic residues; the sequence is EQRKRSKSLDSRLPRDTLEERERQS. A phosphoserine mark is found at Ser214, Ser217, Ser260, Ser278, Ser340, and Ser353. A coiled-coil region spans residues 360 to 1161; the sequence is VAGQGELTRK…SLEKDSWRKA (802 aa). Position 581 is an N6-acetyllysine (Lys581). Residues 1156–1182 are disordered; the sequence is DSWRKASRSAAESTLKHEGLSSDEEFD. A tail region spans residues 1162-1204; the sequence is SRSAAESTLKHEGLSSDEEFDGVYDPSSIASLLTESNLQTSSC. 2 positions are modified to phosphoserine: Ser1176 and Ser1177.

The protein belongs to the cingulin family. Homodimer. Interacts with TJP1/ZO1 and SPEF1.

Its subcellular location is the cell junction. The protein resides in the tight junction. Probably plays a role in the formation and regulation of the tight junction (TJ) paracellular permeability barrier. The protein is Cingulin of Callithrix jacchus (White-tufted-ear marmoset).